Reading from the N-terminus, the 726-residue chain is Catalase-peroxidase (726 aa).

Residues 1-12 are compositionally biased toward polar residues; it reads MSTPSDQHNTLS. The segment at 1-34 is disordered; it reads MSTPSDQHNTLSAGKCPFHQGNSNQTAGGGTSSR. Residues 105-226 constitute a cross-link (tryptophyl-tyrosyl-methioninium (Trp-Tyr) (with M-252)); the sequence is WHSAGTYRSA…LGATEMGLIY (122 aa). Catalysis depends on histidine 106, which acts as the Proton acceptor. Residues 226-252 constitute a cross-link (tryptophyl-tyrosyl-methioninium (Tyr-Met) (with W-105)); it reads YVNPEGPNHSGDPASAAPAIRATFGNM. Position 267 (histidine 267) interacts with heme b.

This sequence belongs to the peroxidase family. Peroxidase/catalase subfamily. Homodimer or homotetramer. Heme b serves as cofactor. In terms of processing, formation of the three residue Trp-Tyr-Met cross-link is important for the catalase, but not the peroxidase activity of the enzyme.

The catalysed reaction is H2O2 + AH2 = A + 2 H2O. It carries out the reaction 2 H2O2 = O2 + 2 H2O. Functionally, bifunctional enzyme with both catalase and broad-spectrum peroxidase activity. The polypeptide is Catalase-peroxidase (Cronobacter sakazakii (strain ATCC BAA-894) (Enterobacter sakazakii)).